The chain runs to 224 residues: Orotidine 5'-phosphate decarboxylase (224 aa).

Residues Asp-10, Lys-32, 59-68 (DLKLHDIPNT), Thr-115, Arg-175, Gln-184, Gly-204, and Arg-205 contribute to the substrate site. Lys-61 serves as the catalytic Proton donor.

It belongs to the OMP decarboxylase family. Type 1 subfamily. Homodimer.

It catalyses the reaction orotidine 5'-phosphate + H(+) = UMP + CO2. The protein operates within pyrimidine metabolism; UMP biosynthesis via de novo pathway; UMP from orotate: step 2/2. Functionally, catalyzes the decarboxylation of orotidine 5'-monophosphate (OMP) to uridine 5'-monophosphate (UMP). The polypeptide is Orotidine 5'-phosphate decarboxylase (Erythrobacter litoralis (strain HTCC2594)).